Consider the following 393-residue polypeptide: Na(+)/H(+) antiporter NhaA (393 aa).

12 helical membrane-spanning segments follow: residues 23–43 (AGGI…NSPF), 58–78 (LSLA…LVGL), 96–116 (MLPG…FAVL), 126–146 (GWAV…SLLG), 155–175 (VFLA…IAIF), 178–198 (AEIS…LFVM), 201–221 (MGVV…FFVF), 224–244 (GVHA…KPAP), 265–285 (VAFI…FKGL), 298–318 (ILLG…WLAI), 334–354 (LYGV…IGLL), and 367–387 (IGVL…LRAA).

Belongs to the NhaA Na(+)/H(+) (TC 2.A.33) antiporter family.

It localises to the cell inner membrane. It catalyses the reaction Na(+)(in) + 2 H(+)(out) = Na(+)(out) + 2 H(+)(in). In terms of biological role, na(+)/H(+) antiporter that extrudes sodium in exchange for external protons. This chain is Na(+)/H(+) antiporter NhaA, found in Brucella canis (strain ATCC 23365 / NCTC 10854 / RM-666).